Consider the following 216-residue polypeptide: Uracil phosphoribosyltransferase (216 aa).

5-phospho-alpha-D-ribose 1-diphosphate-binding positions include R85, R110, and 135-143 (DPMVATGYS). Uracil-binding positions include I200 and 205-207 (GDA). D206 provides a ligand contact to 5-phospho-alpha-D-ribose 1-diphosphate.

The protein belongs to the UPRTase family. The cofactor is Mg(2+).

It carries out the reaction UMP + diphosphate = 5-phospho-alpha-D-ribose 1-diphosphate + uracil. It participates in pyrimidine metabolism; UMP biosynthesis via salvage pathway; UMP from uracil: step 1/1. Allosterically activated by GTP. Catalyzes the conversion of uracil and 5-phospho-alpha-D-ribose 1-diphosphate (PRPP) to UMP and diphosphate. This is Uracil phosphoribosyltransferase from Burkholderia vietnamiensis (strain G4 / LMG 22486) (Burkholderia cepacia (strain R1808)).